A 235-amino-acid chain; its full sequence is Uridylate kinase (235 aa).

An ATP-binding site is contributed by 9–12; the sequence is KLSG. The interval 17 to 22 is involved in allosteric activation by GTP; it reads GDQGYG. Glycine 51 lines the UMP pocket. ATP-binding residues include glycine 52 and arginine 56. UMP is bound by residues aspartate 71 and 132–139; that span reads CGNPFFTT. Positions 159, 165, and 168 each coordinate ATP.

It belongs to the UMP kinase family. As to quaternary structure, homohexamer.

The protein resides in the cytoplasm. It catalyses the reaction UMP + ATP = UDP + ADP. It participates in pyrimidine metabolism; CTP biosynthesis via de novo pathway; UDP from UMP (UMPK route): step 1/1. Its activity is regulated as follows. Allosterically activated by GTP. Inhibited by UTP. Functionally, catalyzes the reversible phosphorylation of UMP to UDP. This chain is Uridylate kinase, found in Synechococcus sp. (strain WH7803).